The sequence spans 273 residues: Ribosomal RNA small subunit methyltransferase A (273 aa).

S-adenosyl-L-methionine is bound by residues Asn-18, Leu-20, Gly-45, Glu-66, Asp-91, and Asn-113.

It belongs to the class I-like SAM-binding methyltransferase superfamily. rRNA adenine N(6)-methyltransferase family. RsmA subfamily.

It localises to the cytoplasm. It catalyses the reaction adenosine(1518)/adenosine(1519) in 16S rRNA + 4 S-adenosyl-L-methionine = N(6)-dimethyladenosine(1518)/N(6)-dimethyladenosine(1519) in 16S rRNA + 4 S-adenosyl-L-homocysteine + 4 H(+). Specifically dimethylates two adjacent adenosines (A1518 and A1519) in the loop of a conserved hairpin near the 3'-end of 16S rRNA in the 30S particle. May play a critical role in biogenesis of 30S subunits. This chain is Ribosomal RNA small subunit methyltransferase A, found in Salmonella agona (strain SL483).